Reading from the N-terminus, the 79-residue chain is Protein S100-G (79 aa).

Residue S2 is modified to N-acetylserine. 2 EF-hand domains span residues 13–48 (IFEKYAAKEGDPDQLSKDELKLLIQAEFPSLLKGPN) and 45–79 (KGPNTLDDLFQELDKNGDGEVSFEEFQVLVKKISQ). Positions 26 and 31 each coordinate Ca(2+). S42 carries the phosphoserine modification. Residues D58, N60, D62, E64, and E69 each contribute to the Ca(2+) site.

Belongs to the S-100 family.

The protein is Protein S100-G (S100G) of Homo sapiens (Human).